The sequence spans 35 residues: Photosystem II reaction center protein Psb30 (35 aa).

Residues 7–27 (VFVQLLLLALIVLAGPAVILL) form a helical membrane-spanning segment.

It belongs to the Psb30/Ycf12 family. In terms of assembly, PSII is composed of 1 copy each of membrane proteins PsbA, PsbB, PsbC, PsbD, PsbE, PsbF, PsbH, PsbI, PsbJ, PsbK, PsbL, PsbM, PsbT, PsbX, PsbY, PsbZ, Psb30/Ycf12, peripheral proteins PsbO, CyanoQ (PsbQ), PsbU, PsbV and a large number of cofactors. It forms dimeric complexes.

Its subcellular location is the cellular thylakoid membrane. A core subunit of photosystem II (PSII), probably helps stabilize the reaction center. In Synechococcus sp. (strain JA-3-3Ab) (Cyanobacteria bacterium Yellowstone A-Prime), this protein is Photosystem II reaction center protein Psb30.